Consider the following 176-residue polypeptide: NAD(P)H-quinone oxidoreductase subunit 6, chloroplastic (176 aa).

Helical transmembrane passes span 10 to 30 (FLLVFLGSGLILGGLGVVLLT), 32 to 52 (PIYSAFSLGLVLVCISLFYIP), 61 to 81 (AQLLIYVGAINVLIIFAVMFM), 92 to 112 (LWTVGDGVTSLLCTSIFVSLI), and 152 to 172 (FFLPFELISIILLVALIGAIA).

The protein belongs to the complex I subunit 6 family. In terms of assembly, NDH is composed of at least 16 different subunits, 5 of which are encoded in the nucleus.

Its subcellular location is the plastid. The protein resides in the chloroplast thylakoid membrane. It catalyses the reaction a plastoquinone + NADH + (n+1) H(+)(in) = a plastoquinol + NAD(+) + n H(+)(out). The catalysed reaction is a plastoquinone + NADPH + (n+1) H(+)(in) = a plastoquinol + NADP(+) + n H(+)(out). Its function is as follows. NDH shuttles electrons from NAD(P)H:plastoquinone, via FMN and iron-sulfur (Fe-S) centers, to quinones in the photosynthetic chain and possibly in a chloroplast respiratory chain. The immediate electron acceptor for the enzyme in this species is believed to be plastoquinone. Couples the redox reaction to proton translocation, and thus conserves the redox energy in a proton gradient. The polypeptide is NAD(P)H-quinone oxidoreductase subunit 6, chloroplastic (ndhG) (Platanus occidentalis (Sycamore)).